Consider the following 169-residue polypeptide: Cell division inhibitor SulA (169 aa).

The segment at 106–112 (ALRTGNY) is ftsZ binding. The interval 162–169 (KIHSNLYH) is lon protease binding.

The protein belongs to the SulA family. Interacts with FtsZ. Is rapidly cleaved and degraded by the Lon protease once DNA damage is repaired.

Component of the SOS system and an inhibitor of cell division. Accumulation of SulA causes rapid cessation of cell division and the appearance of long, non-septate filaments. In the presence of GTP, binds a polymerization-competent form of FtsZ in a 1:1 ratio, thus inhibiting FtsZ polymerization and therefore preventing it from participating in the assembly of the Z ring. This mechanism prevents the premature segregation of damaged DNA to daughter cells during cell division. The chain is Cell division inhibitor SulA from Salmonella arizonae (strain ATCC BAA-731 / CDC346-86 / RSK2980).